The chain runs to 351 residues: Methylthioribose-1-phosphate isomerase (351 aa).

Substrate is bound by residues 51–53 (RGA), Arg-94, and Gln-199. The Proton donor role is filled by Asp-240. Residue 250–251 (NK) coordinates substrate.

It belongs to the EIF-2B alpha/beta/delta subunits family. MtnA subfamily. In terms of assembly, homodimer.

The enzyme catalyses 5-(methylsulfanyl)-alpha-D-ribose 1-phosphate = 5-(methylsulfanyl)-D-ribulose 1-phosphate. Its pathway is amino-acid biosynthesis; L-methionine biosynthesis via salvage pathway; L-methionine from S-methyl-5-thio-alpha-D-ribose 1-phosphate: step 1/6. Catalyzes the interconversion of methylthioribose-1-phosphate (MTR-1-P) into methylthioribulose-1-phosphate (MTRu-1-P). This Bacillus thuringiensis (strain Al Hakam) protein is Methylthioribose-1-phosphate isomerase.